We begin with the raw amino-acid sequence, 61 residues long: U-stichotoxin-Hcr1b (61 aa).

The signal sequence occupies residues Pro1–Ser19. Positions Ile20 to Pro31 are excised as a propeptide. Cystine bridges form between Cys38–Cys49 and Cys41–Cys56.

It belongs to the Hau1a/HC18/HC19 family.

It localises to the secreted. The protein localises to the nematocyst. Functionally, toxin that is lethal to crab. Does not produce the typical symptoms associated with sodium channel toxins in crabs, suggesting that it likely does not act on sodium channels. This is U-stichotoxin-Hcr1b from Radianthus crispa (Leathery sea anemone).